A 241-amino-acid polypeptide reads, in one-letter code: Tetraspanin-1 (241 aa).

Residues 1–11 lie on the Cytoplasmic side of the membrane; it reads MQCFSFIKTMM. A helical membrane pass occupies residues 12–32; it reads ILFNLLIFLCGAALLAVGIWV. Residues 33–52 are Extracellular-facing; sequence SIDGASFLKIFGPLSSSAMQ. The chain crosses the membrane as a helical span at residues 53-73; that stretch reads FVNVGYFLIAAGVVVFALGFL. Topologically, residues 74 to 88 are cytoplasmic; sequence GCYGAKTESKCALVT. The helical transmembrane segment at 89 to 109 threads the bilayer; the sequence is FFFILLLIFIAEVAAAVVALV. Residues 110–211 are Extracellular-facing; sequence YTTMAEHFLT…NQLLYDIRTN (102 aa). Asparagine 141, asparagine 154, asparagine 178, and asparagine 184 each carry an N-linked (GlcNAc...) asparagine glycan. A helical membrane pass occupies residues 212 to 232; it reads AVTVGGVAAGIGGLELAAMIV. At 233–241 the chain is on the cytoplasmic side; that stretch reads SMYLYCNLQ.

Belongs to the tetraspanin (TM4SF) family. As to quaternary structure, interacts with SLC19A2. Interacts with NTRK1/TRKA.

Its subcellular location is the cell membrane. The protein resides in the lysosome membrane. Its function is as follows. Structural component of specialized membrane microdomains known as tetraspanin-enriched microdomains (TERMs), which act as platforms for receptor clustering and signaling. Participates thereby in diverse biological functions such as cell signal transduction, adhesion, migration and protein trafficking. Regulates neuronal differentiation in response to NGF by facilitating NGF-mediated activation of NTRK1/TRKA receptor tyrosine kinase and subsequent downstream signaling pathways. Plays a role in the inhibition of TNFalpha-induced apoptosis. Mechanistically, inhibits the NF-kappa-B signaling pathway by blocking phosphorylation of CHUK. Also promotes the stability of the thiamine transporter 1/SLC19A2 in intestinal epithelial cells leading to an increase of thiamine uptake process. This is Tetraspanin-1 (TSPAN1) from Homo sapiens (Human).